A 653-amino-acid chain; its full sequence is Golgi integral membrane protein 4 (653 aa).

The N-myristoyl glycine moiety is linked to residue G2. The Cytoplasmic segment spans residues 2–12; that stretch reads GNGMCSRKQKR. A helical; Signal-anchor for type II membrane protein transmembrane segment spans residues 13 to 33; it reads IFQTLLLLTVVFGFLYGAMLY. The Lumenal portion of the chain corresponds to 34 to 653; that stretch reads LELQTQLRKA…AEKSHRRAEM (620 aa). The interval 38–107 is golgi targeting; sequence TQLRKAEAVA…ETLNKGRQDS (70 aa). The stretch at 66 to 216 forms a coiled coil; that stretch reads EHRSRLEKSL…KQLKDTLNRI (151 aa). The tract at residues 80 to 175 is endosome targeting; the sequence is LEHKKAKEDF…QELSKLKETV (96 aa). The tract at residues 122–143 is disordered; the sequence is KSQHEELRKQHSDLEEEHRKQG. Basic and acidic residues predominate over residues 123–143; the sequence is SQHEELRKQHSDLEEEHRKQG. Residues 176–220 are golgi targeting; that stretch reads YNLREENRQLRKAHQDIHTQLQDVKTQVAEYKQLKDTLNRIPSFR. N-linked (GlcNAc...) asparagine glycosylation occurs at N229. A disordered region spans residues 253–653; that stretch reads QEGQQNHDAM…AEKSHRRAEM (401 aa). Composition is skewed to basic and acidic residues over residues 261-270, 290-307, 319-328, 348-360, and 381-398; these read AMPRRMEEKP, EPREPEGRQVEEEHRKAL, EHLEEEHDPS, LDGRPQAEIEHST, and ARRDEEAQRLREHQEALH. S328 carries the post-translational modification Phosphoserine. Over residues 399–423 the composition is skewed to low complexity; it reads QQRLHGQLLRQQQQQQYLAREMAQQ. Basic and acidic residues-rich tracts occupy residues 466-505 and 527-545; these read AYDRDNQRQDEAEGDPGNRQEFHEPGHQEGDPEAEADRAA and EQVREENLPEESEERKQSE. A Phosphoserine modification is found at S538. The segment covering 565–587 has biased composition (acidic residues); sequence QQEDNVDEQYQEEGEEEVQEDLT. Y574 is modified (phosphotyrosine). Position 587 is a phosphothreonine (T587). Residues 588-599 are compositionally biased toward basic and acidic residues; sequence EEKKRELEHNAE. Y631 bears the Phosphotyrosine mark. A compositionally biased stretch (acidic residues) spans 631–640; sequence YEEEEDEEDG.

It belongs to the GOLIM4 family. Post-translationally, phosphorylated by c-AMP-dependent kinases most probably in its lumenal part. In terms of processing, O-glycosylated; modified by sialic acid residues. N-glycosylated; N-glycans are of the complex type and modified by sialic acid residues. In terms of tissue distribution, expressed in liver, pancreas and pituitary (at protein level).

It localises to the golgi apparatus. The protein localises to the golgi stack membrane. It is found in the endosome membrane. Its subcellular location is the membrane. Plays a role in endosome to Golgi protein trafficking; mediates protein transport along the late endosome-bypass pathway from the early endosome to the Golgi. The protein is Golgi integral membrane protein 4 (Golim4) of Rattus norvegicus (Rat).